A 120-amino-acid chain; its full sequence is Large ribosomal subunit protein uL18 (120 aa).

Belongs to the universal ribosomal protein uL18 family. As to quaternary structure, part of the 50S ribosomal subunit; part of the 5S rRNA/L5/L18/L25 subcomplex. Contacts the 5S and 23S rRNAs.

Functionally, this is one of the proteins that bind and probably mediate the attachment of the 5S RNA into the large ribosomal subunit, where it forms part of the central protuberance. The polypeptide is Large ribosomal subunit protein uL18 (Methylorubrum extorquens (strain CM4 / NCIMB 13688) (Methylobacterium extorquens)).